Reading from the N-terminus, the 252-residue chain is Undecaprenyl-diphosphatase (252 aa).

7 helical membrane-spanning segments follow: residues 1 to 21 (MTTL…FLPI), 42 to 62 (HKAF…FLYF), 74 to 94 (ILIA…IIKS), 95 to 115 (LFNP…LILI), 172 to 192 (AAEF…FYDV), 206 to 226 (NLIV…KWLL), and 232 to 252 (HSFI…YLWY).

It belongs to the UppP family.

It localises to the cell inner membrane. The enzyme catalyses di-trans,octa-cis-undecaprenyl diphosphate + H2O = di-trans,octa-cis-undecaprenyl phosphate + phosphate + H(+). Functionally, catalyzes the dephosphorylation of undecaprenyl diphosphate (UPP). Confers resistance to bacitracin. In Sulfurihydrogenibium sp. (strain YO3AOP1), this protein is Undecaprenyl-diphosphatase.